Here is a 206-residue protein sequence, read N- to C-terminus: Small ribosomal subunit protein uS4 (206 aa).

Residues 25 to 39 show a composition bias toward basic and acidic residues; the sequence is DKLLDRKPNGPGKER. Residues 25–49 form a disordered region; the sequence is DKLLDRKPNGPGKERGARKRGKTSV. One can recognise an S4 RNA-binding domain in the interval 95–157; sequence QRLDNTIYRM…KGIQNLIRHN (63 aa).

The protein belongs to the universal ribosomal protein uS4 family. In terms of assembly, part of the 30S ribosomal subunit. Contacts protein S5. The interaction surface between S4 and S5 is involved in control of translational fidelity.

Its function is as follows. One of the primary rRNA binding proteins, it binds directly to 16S rRNA where it nucleates assembly of the body of the 30S subunit. With S5 and S12 plays an important role in translational accuracy. This chain is Small ribosomal subunit protein uS4, found in Treponema denticola (strain ATCC 35405 / DSM 14222 / CIP 103919 / JCM 8153 / KCTC 15104).